Here is a 709-residue protein sequence, read N- to C-terminus: MMIARMETSATAAAATSAPRLRLAKRSLFDPMIVRSALPQSLRKLAPRVQARNPVMLVVLVGAVITTLAFLRDLASSTAQENVFNGLVAAFLWFTVLFANFAEAMAEGRGKAQAAALRKVRSETMANRRTAAGNIESVPSSRLDLDDVVEVSAGETIPSDGEIIEGIASVDESAITGESAPVIRESGGDRSAVTGGTVVLSDRIVVRITAKQGQTFIDRMIALVEGAARQQTPNEIALNILLAGLTIIFLLAVVTLQPFAIYSGGGQRVVVLVALLVCLIPTTIGALLSAIGIAGMDRLVQHNVLATSGRAVEAAGDVNTLLLDKTGTITLGNRQATEFVPINGVSAEAVADAAQLSSLADETPEGRSIVVLAKDEFGLRARDEGVMSHARFVPFTAETRMSGVDLAEVSGIRRIRKGAAAAVMKWVRDHGGHPTEEVGAIVDGISSGGGTPLVVAEWTDNSSARAIGVVHLKDIVKVGIRERFDEMRRMSIRTVMITGDNPATAKAIAQEAGVDDFLAEATPEDKLALIKREQQGGRLVAMTGDGTNDAPALAQADVGVAMNTGTQAAREAGNMVDLDSDPTKLIEVVEIGKQLLITRGALTTFSIANDVAKYFAIIPAMFVGLYPVLDKLNVMALHSPRSAILSAVIFNALVIVALIPLALRGVRFRAESASAMLRRNLLIYGLGGLVVPFIGIKLVDLVIVALGVS.

Transmembrane regions (helical) follow at residues 55–75 (VMLV…RDLA), 86–106 (GLVA…EAMA), 236–256 (IALN…VVTL), and 269–289 (VVVL…ALLS). Asp-324 functions as the 4-aspartylphosphate intermediate in the catalytic mechanism. ATP contacts are provided by residues Asp-361, Glu-365, 395 to 402 (FTAETRMS), and Lys-417. Asp-545 and Asp-549 together coordinate Mg(2+). A run of 3 helical transmembrane segments spans residues 615–635 (FAII…LNVM), 643–663 (AILS…PLAL), and 688–708 (GLVV…ALGV).

This sequence belongs to the cation transport ATPase (P-type) (TC 3.A.3) family. Type IA subfamily. As to quaternary structure, the system is composed of three essential subunits: KdpA, KdpB and KdpC.

Its subcellular location is the cell membrane. It catalyses the reaction K(+)(out) + ATP + H2O = K(+)(in) + ADP + phosphate + H(+). Its function is as follows. Part of the high-affinity ATP-driven potassium transport (or Kdp) system, which catalyzes the hydrolysis of ATP coupled with the electrogenic transport of potassium into the cytoplasm. This subunit is responsible for energy coupling to the transport system and for the release of the potassium ions to the cytoplasm. The protein is Potassium-transporting ATPase ATP-binding subunit of Mycobacterium tuberculosis (strain ATCC 25618 / H37Rv).